The primary structure comprises 276 residues: Large ribosomal subunit protein uL2 (276 aa).

Positions 223 to 276 (GVAMNPVDHPHGGGEGRGKGHHPTSPWGLPTKGYKTRRGKRPSDKFIVRRRNEV) are disordered. 2 stretches are compositionally biased toward basic and acidic residues: residues 230 to 240 (DHPHGGGEGRG) and 263 to 276 (RPSDKFIVRRRNEV).

The protein belongs to the universal ribosomal protein uL2 family. Part of the 50S ribosomal subunit. Forms a bridge to the 30S subunit in the 70S ribosome.

Its function is as follows. One of the primary rRNA binding proteins. Required for association of the 30S and 50S subunits to form the 70S ribosome, for tRNA binding and peptide bond formation. It has been suggested to have peptidyltransferase activity; this is somewhat controversial. Makes several contacts with the 16S rRNA in the 70S ribosome. This Thermotoga neapolitana (strain ATCC 49049 / DSM 4359 / NBRC 107923 / NS-E) protein is Large ribosomal subunit protein uL2.